Consider the following 251-residue polypeptide: 5'-nucleotidase SurE (251 aa).

4 residues coordinate a divalent metal cation: D8, D9, S39, and N95.

This sequence belongs to the SurE nucleotidase family. A divalent metal cation is required as a cofactor.

Its subcellular location is the cytoplasm. It catalyses the reaction a ribonucleoside 5'-phosphate + H2O = a ribonucleoside + phosphate. Functionally, nucleotidase that shows phosphatase activity on nucleoside 5'-monophosphates. This chain is 5'-nucleotidase SurE, found in Ralstonia nicotianae (strain ATCC BAA-1114 / GMI1000) (Ralstonia solanacearum).